A 46-amino-acid chain; its full sequence is Esculentin-1SEb (46 aa).

Cysteine 40 and cysteine 46 are disulfide-bonded.

As to expression, expressed by the skin glands.

It localises to the secreted. Its function is as follows. Mast cell degranulating peptide. Causes histamine release from rat peritoneal mast cells in vitro. Has antibacterial activity against the Gram-negative bacterium E.coli K12 and Gram-positive bacterium M.luteus NCT C2665. In Lithobates sevosus (Dusky gopher frog), this protein is Esculentin-1SEb.